We begin with the raw amino-acid sequence, 282 residues long: Putative 4-diphosphocytidyl-2-C-methyl-D-erythritol kinase (282 aa).

Lys9 is a catalytic residue. 93-103 lines the ATP pocket; that stretch reads PVSAGLAGGSA. Asp135 is a catalytic residue.

The protein belongs to the GHMP kinase family. IspE subfamily.

The enzyme catalyses 4-CDP-2-C-methyl-D-erythritol + ATP = 4-CDP-2-C-methyl-D-erythritol 2-phosphate + ADP + H(+). In terms of biological role, catalyzes the phosphorylation of the position 2 hydroxy group of 4-diphosphocytidyl-2C-methyl-D-erythritol. The polypeptide is Putative 4-diphosphocytidyl-2-C-methyl-D-erythritol kinase (Staphylococcus aureus (strain bovine RF122 / ET3-1)).